The following is a 199-amino-acid chain: Early activation antigen CD69 (199 aa).

Positions 1–14 (MDSENCSITENSSS) are enriched in polar residues. Positions 1-20 (MDSENCSITENSSSHLERGQ) are disordered. Over 1–40 (MDSENCSITENSSSHLERGQKDHGTSIHFEKHHEGSIQVS) the chain is Cytoplasmic. A helical; Signal-anchor for type II membrane protein transmembrane segment spans residues 41-61 (IPWAVLIVVLITSLIIALIAL). The Extracellular portion of the chain corresponds to 62 to 199 (NVGKYNCPGL…FHWVCSKPSR (138 aa)). 3 disulfide bridges follow: cysteine 85/cysteine 96, cysteine 113/cysteine 194, and cysteine 173/cysteine 186. One can recognise a C-type lectin domain in the interval 92–195 (YKRTCYFFST…CEANFHWVCS (104 aa)). N-linked (GlcNAc...) asparagine glycans are attached at residues asparagine 150, asparagine 166, and asparagine 180.

As to quaternary structure, homodimer; disulfide-linked. Interacts with S100A8 and S100A9. Interacts with galactin-1/LGALS1. Interacts with S1PR1; this interaction mediates S1PR1 degradation. Interacts with JAK3 and STAT5. Post-translationally, constitutive Ser/Thr phosphorylation in both mature thymocytes and activated T-lymphocytes. As to expression, expressed on the surface of activated T-cells, B-cells, natural killer cells, neutrophils and platelets. Present also in eosinophils.

Its subcellular location is the cell membrane. Transmembrane protein expressed mainly on T-cells resident in mucosa that plays an essential role in immune cell homeostasis. Rapidly expressed on the surface of platelets, T-lymphocytes and NK cells upon activation by various stimuli, such as antigen recognition or cytokine signaling, stimulates different signaling pathways in different cell types. Negatively regulates Th17 cell differentiation through its carbohydrate dependent interaction with galectin-1/LGALS1 present on immature dendritic cells. Association of CD69 cytoplasmic tail with the JAK3/STAT5 signaling pathway regulates the transcription of RORgamma/RORC and, consequently, differentiation toward the Th17 lineage. Also acts via the S100A8/S100A9 complex present on peripheral blood mononuclear cells to promote the conversion of naive CD4 T-cells into regulatory T-cells. Acts as an oxidized low-density lipoprotein (oxLDL) receptor in CD4 T-lymphocytes and negatively regulates the inflammatory response by inducing the expression of PDCD1 through the activation of NFAT. Participates in adipose tissue-derived mesenchymal stem cells (ASCs)-mediated protection against P.aeruginosa infection. Mechanistically, specifically recognizes P.aeruginosa to promote ERK1 activation, followed by granulocyte-macrophage colony-stimulating factor (GM-CSF) and other inflammatory cytokines secretion. In eosinophils, induces IL-10 production through the ERK1/2 pathway. Negatively regulates the chemotactic responses of effector lymphocytes and dendritic cells (DCs) to sphingosine 1 phosphate/S1P by acting as a S1PR1 receptor agonist and facilitating the internalization and degradation of the receptor. The protein is Early activation antigen CD69 (Cd69) of Mus musculus (Mouse).